The chain runs to 512 residues: MKTTNKIIILDFGSQYTQLIARRIRDLEVYCEVWPYNTALEKIKTTSMKGIILSGGPASVYEEDAFLIDKQLFELKVPVLGICYGMQIISHLHEGTVQRATKQEFGFSELIIDNQEDLFANIPVKSQVWMSHADYIEGMPTNFIQIAHSENSISAIKHSEKKIYGLQFHPEVTHTLIGQQLLSNFVFNICGCQPKWKITEFISAAITEIKNKVGTDNVVLALSGGVDSSVCAVLLHKAIGKQLTCIFVDTGLLRQNSGWNDLQKFQEKFKLNIIKINAQERFLTALKGVTNPEEKRKIIGNLFIEIFNEEAIKIQNVKWLGQGTIYPDVIESVSVKGPSATIKSHHNVGGLPKDLPFQLIEPLRELFKDEVRRTGEALGIDFKFVYKHPFPGPGLAVRIIGEITAEKIALLQAADQIFIDELYQANLYDQVAQAFVVLLPVQSVGVMGDVRTYGYTAVVRSVDTTDFMTANWSRLPFELLEKVSARIVSEVHGINRITYDITSKPPGTIEWE.

In terms of domain architecture, Glutamine amidotransferase type-1 spans 6–195; it reads KIIILDFGSQ…VFNICGCQPK (190 aa). C83 (nucleophile) is an active-site residue. Catalysis depends on residues H169 and E171. In terms of domain architecture, GMPS ATP-PPase spans 196-387; that stretch reads WKITEFISAA…LGIDFKFVYK (192 aa). 223–229 contributes to the ATP binding site; that stretch reads SGGVDSS.

In terms of assembly, homodimer.

The catalysed reaction is XMP + L-glutamine + ATP + H2O = GMP + L-glutamate + AMP + diphosphate + 2 H(+). It participates in purine metabolism; GMP biosynthesis; GMP from XMP (L-Gln route): step 1/1. Functionally, catalyzes the synthesis of GMP from XMP. The protein is GMP synthase [glutamine-hydrolyzing] of Spiroplasma kunkelii.